The following is a 59-amino-acid chain: Small ribosomal subunit protein bS21 (59 aa).

It belongs to the bacterial ribosomal protein bS21 family.

This is Small ribosomal subunit protein bS21 from Acaryochloris marina (strain MBIC 11017).